The following is a 47-amino-acid chain: Large ribosomal subunit protein bL34 (47 aa).

This sequence belongs to the bacterial ribosomal protein bL34 family.

This chain is Large ribosomal subunit protein bL34, found in Corynebacterium jeikeium (strain K411).